Here is a 377-residue protein sequence, read N- to C-terminus: Chaperone protein DnaJ (377 aa).

The region spanning 5–70 is the J domain; the sequence is DFYEVLGVDR…EKRSAYDRMG (66 aa). The CR-type zinc finger occupies 136-214; sequence GCKKEISFTA…CHGTGVKDKS (79 aa). 8 residues coordinate Zn(2+): Cys-149, Cys-152, Cys-166, Cys-169, Cys-188, Cys-191, Cys-202, and Cys-205. CXXCXGXG motif repeat units lie at residues 149 to 156, 166 to 173, 188 to 195, and 202 to 209; these read CETCDGKG, CSTCGGHG, CPNCGGSG, and CNDCHGTG. Positions 353–377 are disordered; sequence LDGDSKHHQSPKKKSFFEKLGDLFD. Over residues 367 to 377 the composition is skewed to basic and acidic residues; the sequence is SFFEKLGDLFD.

Belongs to the DnaJ family. Homodimer. Requires Zn(2+) as cofactor.

It is found in the cytoplasm. Its function is as follows. Participates actively in the response to hyperosmotic and heat shock by preventing the aggregation of stress-denatured proteins and by disaggregating proteins, also in an autonomous, DnaK-independent fashion. Unfolded proteins bind initially to DnaJ; upon interaction with the DnaJ-bound protein, DnaK hydrolyzes its bound ATP, resulting in the formation of a stable complex. GrpE releases ADP from DnaK; ATP binding to DnaK triggers the release of the substrate protein, thus completing the reaction cycle. Several rounds of ATP-dependent interactions between DnaJ, DnaK and GrpE are required for fully efficient folding. Also involved, together with DnaK and GrpE, in the DNA replication of plasmids through activation of initiation proteins. This is Chaperone protein DnaJ from Psychrobacter sp. (strain PRwf-1).